Consider the following 49-residue polypeptide: Lectin alpha chain (49 aa).

The protein belongs to the leguminous lectin family. As to quaternary structure, homotetramer. The beta and gamma chains are produced by partial proteolytic processing of the lectin alpha chain by an asparaginyl endopeptidase. Mixture of 60% alpha lectin and 40% of its beta and gamma proteolytic fragments. As to expression, seed.

Functionally, D-mannose/D-glucose-binding lectin. This chain is Lectin alpha chain, found in Dioclea violacea.